Consider the following 404-residue polypeptide: 6-hydroxytryptophan 2,3-dioxygenase fscD (404 aa).

Heme b is bound at residue His-341.

This sequence belongs to the indoleamine 2,3-dioxygenase family. The cofactor is heme.

It functions in the pathway secondary metabolite biosynthesis. Functionally, 6-hydroxytryptophan 2,3-dioxygenase; part of the fragmented gene cluster that mediates the biosynthesis of fusarochromene, a tryptophan-derived metabolite closely related to a group of mycotoxins including fusarochromanone. Within the pathway, fscD is responsible of the cleavage of the pyrrole ring of 6-hydroxytryptophan. The first step of the pathway is the epimerization of L-tryptophan to D-tryptophan in the presence of the NRPS-like tryptophan epimerase fscC. D-tryptophan is subsequently hydroxylated by the tryptophan 6-hydroxylase fscE to yield 6-hydroxytryptophan. The pyrrole ring undergoes cleavaged by the tryptophan 2,3-dioxygenase fscD and is finally converted to 4-hydroxykyrunenine by the hydrolase fscH. The NRPS-like oxidoreductase fscA reduces the carboxyl group to primary alcohol and the DMATS-type prenyltransferase fscG performs prenylation, followed by the formation of a chromene ring catalyzed by the oxidoreductase fscI, which leads to desacetylfusarochromene. Epoxidation by fscF and rearrangement reactions of chromene double bonds convert compound desacetylfusarochromene to fusarochromanones. Although specific acetyltransferases were not found near the fsc gene cluster, several predicted enzymes containing the N-acetyltransferase superfamily domain are present in the genome of F.equiseti. These predicted enzymes may have the potential to convert desacetylfusarochromene to fusarochromene. This chain is 6-hydroxytryptophan 2,3-dioxygenase fscD, found in Fusarium equiseti (Fusarium scirpi).